The primary structure comprises 271 residues: Regulatory protein RecX (271 aa).

It belongs to the RecX family.

It is found in the cytoplasm. In terms of biological role, modulates RecA activity. This chain is Regulatory protein RecX, found in Lactobacillus delbrueckii subsp. bulgaricus (strain ATCC BAA-365 / Lb-18).